We begin with the raw amino-acid sequence, 419 residues long: UDP-N-acetylglucosamine 1-carboxyvinyltransferase (419 aa).

A phosphoenolpyruvate-binding site is contributed by 22 to 23; sequence KN. Arg-91 serves as a coordination point for UDP-N-acetyl-alpha-D-glucosamine. Residue Cys-115 is the Proton donor of the active site. 2-(S-cysteinyl)pyruvic acid O-phosphothioketal is present on Cys-115. Residues 120–124, 160–163, Asp-305, and Ile-327 contribute to the UDP-N-acetyl-alpha-D-glucosamine site; these read RPVDL and KVSV.

This sequence belongs to the EPSP synthase family. MurA subfamily.

It is found in the cytoplasm. It catalyses the reaction phosphoenolpyruvate + UDP-N-acetyl-alpha-D-glucosamine = UDP-N-acetyl-3-O-(1-carboxyvinyl)-alpha-D-glucosamine + phosphate. It participates in cell wall biogenesis; peptidoglycan biosynthesis. Functionally, cell wall formation. Adds enolpyruvyl to UDP-N-acetylglucosamine. This Klebsiella pneumoniae subsp. pneumoniae (strain ATCC 700721 / MGH 78578) protein is UDP-N-acetylglucosamine 1-carboxyvinyltransferase.